Reading from the N-terminus, the 855-residue chain is Pentatricopeptide repeat-containing protein At1g74750 (855 aa).

Positions 21 to 40 are disordered; the sequence is GSRPSAADGNSCTCAEDESG. PPR repeat units follow at residues 358–392, 393–427, 428–462, 463–497, 498–532, 533–567, 568–602, and 603–637; these read DGHT…GCKP, NTVT…GCEP, DRVT…GLSP, DTFT…GCTP, NLVT…GFQP, DKVT…NWVP, DEPV…GLRP, and NVPT…GLHP. Residues 755–838 form the Smr domain; that stretch reads INLHVMSEGT…NSGCFVGSGE (84 aa).

The protein belongs to the PPR family. P subfamily.

The chain is Pentatricopeptide repeat-containing protein At1g74750 from Arabidopsis thaliana (Mouse-ear cress).